A 337-amino-acid chain; its full sequence is Retrovirus-related Pol polyprotein from type-1 retrotransposable element R1 (337 aa).

The 118-residue stretch at Gly1–Met118 folds into the Reverse transcriptase domain. The nucleic acid-binding endonuclease stretch occupies residues Lys253 to Asp337.

It carries out the reaction DNA(n) + a 2'-deoxyribonucleoside 5'-triphosphate = DNA(n+1) + diphosphate. This Nasonia vitripennis (Parasitic wasp) protein is Retrovirus-related Pol polyprotein from type-1 retrotransposable element R1.